The sequence spans 245 residues: Complement C1q subcomponent subunit A (245 aa).

Positions M1–T22 are cleaved as a signal peptide. Residues R27–R38 show a composition bias toward basic and acidic residues. The tract at residues R27–R114 is disordered. The 79-residue stretch at G31–I109 folds into the Collagen-like domain. K33 is modified (5-hydroxylysine). An O-linked (Gal...) hydroxylysine glycan is attached at K33. 2 positions are modified to 4-hydroxyproline: P39 and P45. K48 carries the post-translational modification 5-hydroxylysine. K48 is a glycosylation site (O-linked (Gal...) hydroxylysine). 4-hydroxyproline is present on residues P54 and P57. K67 is modified (5-hydroxylysine). Residue K67 is glycosylated (O-linked (Gal...) hydroxylysine). Residues P73, P79, and P85 each carry the 4-hydroxyproline modification. A 5-hydroxylysine modification is found at K100. K100 is a glycosylation site (O-linked (Gal...) hydroxylysine). In terms of domain architecture, C1q spans K110–A245. N-linked (GlcNAc...) asparagine glycosylation is present at N146. C172 and C190 are oxidised to a cystine. Q199 serves as a coordination point for Ca(2+).

Core component of the complement C1 complex, a calcium-dependent complex composed of 1 molecule of the C1Q subcomplex, 2 molecules of C1R and 2 molecules of C1S. The C1Q subcomplex is composed 18 subunits: 3 chains of C1QA, C1QB, and C1QC trimerize to form 6 collagen-like triple helices connected to six globular ligand-recognition modules (C1q domain). Interacts with CR1 (via Sushi 24 and Sushi 25 domains). Interacts (via C-terminus) with CD33; this interaction activates CD33 inhibitory motifs. As to quaternary structure, (Microbial infection) Interacts with Staphylococcus aureus protein Cna; this interaction results in the inhibition of the classical complement pathway. O-linked glycans are assumed to be the Glc-Gal disaccharides typically found as secondary modifications of hydroxylated lysines in collagen-like domains.

It localises to the secreted. Its subcellular location is the cell surface. The C1Q subcomplex is inhibited by sulfated molecules, such as triterpenoid sulfates, heparan sulfate, or chondroitin sulfates. Core component of the complement C1 complex, a multiprotein complex that initiates the classical pathway of the complement system, a cascade of proteins that leads to phagocytosis and breakdown of pathogens and signaling that strengthens the adaptive immune system. The classical complement pathway is initiated by the C1Q subcomplex of the C1 complex, which specifically binds IgG or IgM immunoglobulins complexed with antigens, forming antigen-antibody complexes on the surface of pathogens: C1QA, together with C1QB and C1QC, specifically recognizes and binds the Fc regions of IgG or IgM via its C1q domain. Immunoglobulin-binding activates the proenzyme C1R, which cleaves C1S, initiating the proteolytic cascade of the complement system. The C1Q subcomplex is activated by a hexamer of IgG complexed with antigens, while it is activated by a pentameric IgM. The C1Q subcomplex also recognizes and binds phosphatidylserine exposed on the surface of cells undergoing programmed cell death, possibly promoting activation of the complement system. The polypeptide is Complement C1q subcomponent subunit A (Homo sapiens (Human)).